A 128-amino-acid polypeptide reads, in one-letter code: Small ribosomal subunit protein uS11m (128 aa).

This sequence belongs to the universal ribosomal protein uS11 family.

It is found in the mitochondrion. The polypeptide is Small ribosomal subunit protein uS11m (RPS11) (Prototheca wickerhamii).